The chain runs to 459 residues: WD repeat-containing protein 41 (459 aa).

WD repeat units lie at residues 40–79 (KAHH…KLLE), 82–128 (GHTQ…QVQR), 131–168 (CFQS…LCKT), 220–258 (DHQD…MQAY), 321–359 (AHDS…QLAA), and 403–441 (GHSS…SGLR).

As to quaternary structure, component of the C9orf72-SMCR8 complex, at least composed of C9orf72, SMCR8 and WDR41. The complex is formed of two protomers, each individually consisting of one molecule each of C9orf72, SMCR8 and WDR41. The protomers homodimerize via an interaction between C9orf72 (via C-terminus) and SMCR8 (via N-terminus). Within each protomer SMCR8 (via DENN domain) acts as a bridging protein between WDR41 (via C-terminus and N-terminus) and C9orf72 (via C-terminus). The C9orf72-SMCR8 complex associates with the ULK1/ATG1 kinase complex.

The protein resides in the cytoplasm. In terms of biological role, non-catalytic component of the C9orf72-SMCR8 complex, a complex that has guanine nucleotide exchange factor (GEF) activity and regulates autophagy. The C9orf72-SMCR8 complex promotes the exchange of GDP to GTP, converting inactive GDP-bound RAB8A and RAB39B into their active GTP-bound form, thereby promoting autophagosome maturation. As part of the C9orf72-SMCR8 complex, stimulates RAB8A and RAB11A GTPase activity in vitro, however WDR42 is shown not be an essential complex component for this function. The C9orf72-SMCR8 complex also acts as a negative regulator of autophagy initiation by interacting with the ULK1/ATG1 kinase complex and inhibiting its protein kinase activity. The protein is WD repeat-containing protein 41 of Homo sapiens (Human).